Consider the following 103-residue polypeptide: N(4)-acetylcytidine amidohydrolase (103 aa).

An ASCH domain is found at 6 to 101; the sequence is ITFFQRFQDD…QTQFYVIEFK (96 aa). K21 (proton acceptor) is an active-site residue. The Nucleophile role is filled by T24. The active-site Proton donor is E74.

The protein belongs to the N(4)-acetylcytidine amidohydrolase family.

The enzyme catalyses N(4)-acetylcytidine + H2O = cytidine + acetate + H(+). The catalysed reaction is N(4)-acetyl-2'-deoxycytidine + H2O = 2'-deoxycytidine + acetate + H(+). It catalyses the reaction N(4)-acetylcytosine + H2O = cytosine + acetate + H(+). Its function is as follows. Catalyzes the hydrolysis of N(4)-acetylcytidine (ac4C). In Escherichia coli (strain K12 / MC4100 / BW2952), this protein is N(4)-acetylcytidine amidohydrolase (yqfB).